The chain runs to 391 residues: MRITGIIAEYNPLHNGHIYQLQQARQQSQADLVIVCMSGNYVQRGQAALLDKWTRAELALQNGADMVVELPFVSAVQPADRFATGAVQLLAALGCQTIAFGSEQPTFDYQQAGQQIIDLPEQSAAFVDYQKTYATQLNEFYQEQLSLQIDQPNHLLGISYAVANARLAQPLNLLAIKREQAQHGDQTVSTAPYASASAIRQVVTQGTALAALQHVVPAGTLAALADSTLLTEDQLWPLLKYRIESLSLAQLRQVYQMSEGLEYRFKKVIHKANSYTELLQALKTKRYTYARLQRVCLYVLLNIQPADIQQGLQRTYIRLLGFNEIGQQHLHQLKKTTDLPIISKVSAKMGAETGLLGLEVRVDRLCEQFGWQSQNFARQPIFYHGKDEAHC.

Residues Ile7–Gln20, Gly101, Asn153, and Arg178 each bind ATP.

It belongs to the TmcAL family.

It localises to the cytoplasm. The enzyme catalyses cytidine(34) in elongator tRNA(Met) + acetate + ATP = N(4)-acetylcytidine(34) in elongator tRNA(Met) + AMP + diphosphate. Catalyzes the formation of N(4)-acetylcytidine (ac(4)C) at the wobble position of elongator tRNA(Met), using acetate and ATP as substrates. First activates an acetate ion to form acetyladenylate (Ac-AMP) and then transfers the acetyl group to tRNA to form ac(4)C34. This chain is tRNA(Met) cytidine acetate ligase, found in Latilactobacillus sakei subsp. sakei (strain 23K) (Lactobacillus sakei subsp. sakei).